Reading from the N-terminus, the 388-residue chain is Glucose-1-phosphate adenylyltransferase (388 aa).

Residues Tyr-100, Gly-165, 180–181 (EK), and Ser-191 each bind alpha-D-glucose 1-phosphate.

It belongs to the bacterial/plant glucose-1-phosphate adenylyltransferase family. Homotetramer.

The catalysed reaction is alpha-D-glucose 1-phosphate + ATP + H(+) = ADP-alpha-D-glucose + diphosphate. Its pathway is glycan biosynthesis; glycogen biosynthesis. In terms of biological role, involved in the biosynthesis of ADP-glucose, a building block required for the elongation reactions to produce glycogen. Catalyzes the reaction between ATP and alpha-D-glucose 1-phosphate (G1P) to produce pyrophosphate and ADP-Glc. The polypeptide is Glucose-1-phosphate adenylyltransferase (Clostridium perfringens (strain SM101 / Type A)).